Here is a 2202-residue protein sequence, read N- to C-terminus: Activating signal cointegrator 1 complex subunit 3 (2202 aa).

Residues 1 to 400 (MALPRLTGAL…RQRDADVEKI (400 aa)) form a required for interaction with ASCC2 region. Phosphoserine is present on serine 12. Coiled coils occupy residues 18-79 (KQDN…AAKQ) and 328-356 (IQSEQEKQLMKQYRREEKRIARREKKAGE). Residues 486-669 (ETAYNTNENM…FLHVNPYIGL (184 aa)) form the Helicase ATP-binding 1 domain. 499 to 506 (APTGAGKT) is an ATP binding site. Lysine 572 carries the N6-acetyllysine modification. The DEVH box signature appears at 611-614 (DEVH). A Helicase C-terminal 1 domain is found at 728-914 (TVRTAMSLIE…GTVTNVEEAV (187 aa)). Residues 978-1287 (STDLGRTASH…GAEAVCIINF (310 aa)) form the SEC63 1 domain. Residues 1336-1511 (HTLYHTDCNV…WLNIKQMGLF (176 aa)) form the Helicase ATP-binding 2 domain. Position 1349–1356 (1349–1356 (APTGSGKT)) interacts with ATP. Residues 1453-1456 (DEIH) carry the DEIH box motif. A Helicase C-terminal 2 domain is found at 1544–1739 (PAFQAIRSHS…VLSDHLNAEI (196 aa)). In terms of domain architecture, SEC63 2 spans 1812-2176 (PLTYGRIASY…LGLDQQYDIY (365 aa)). Serine 2195 bears the Phosphoserine mark.

It belongs to the helicase family. As to quaternary structure, identified in the ASCC complex that contains ASCC1, ASCC2 and ASCC3. Functions as scaffolding subunit that interacts directly with both ASCC1 and ASCC2. Interacts directly with ALKBH3, and thereby recruits ALKBH3 to the ASCC complex. Part of the ASC-1/TRIP4 complex, that contains TRIP4, ASCC1, ASCC2 and ASCC3. Part of the RQT (ribosome quality control trigger) complex, that contains ASCC2, ASCC3 and TRIP4. Associates with ribosomes; recruited to collided ribosomes. Interacts with ZCCHC4. Interacts with ZNF598. Interacts with RPS3. As to expression, ubiquitous.

Its subcellular location is the nucleus. The protein resides in the nucleus speckle. It is found in the cytoplasm. The protein localises to the cytosol. The catalysed reaction is Couples ATP hydrolysis with the unwinding of duplex DNA by translocating in the 3'-5' direction.. It carries out the reaction ATP + H2O = ADP + phosphate + H(+). Its function is as follows. ATPase involved both in DNA repair and rescue of stalled ribosomes. 3'-5' DNA helicase involved in repair of alkylated DNA: promotes DNA unwinding to generate single-stranded substrate needed for ALKBH3, enabling ALKBH3 to process alkylated N3-methylcytosine (3mC) within double-stranded regions. Also involved in activation of the ribosome quality control (RQC) pathway, a pathway that degrades nascent peptide chains during problematic translation. Drives the splitting of stalled ribosomes that are ubiquitinated in a ZNF598-dependent manner, as part of the ribosome quality control trigger (RQT) complex. Part of the ASC-1 complex that enhances NF-kappa-B, SRF and AP1 transactivation. The protein is Activating signal cointegrator 1 complex subunit 3 (ASCC3) of Homo sapiens (Human).